A 171-amino-acid polypeptide reads, in one-letter code: NADH-quinone oxidoreductase subunit I 2 (171 aa).

4Fe-4S ferredoxin-type domains lie at 39–71 and 81–110; these read IVLTRDPDGQERCVACNLCAVACPVGCIDLSKA and EHFRINFARCIFCGYCEEACPTAAIQLTPD. 8 residues coordinate [4Fe-4S] cluster: Cys51, Cys54, Cys57, Cys61, Cys90, Cys93, Cys96, and Cys100.

This sequence belongs to the complex I 23 kDa subunit family. In terms of assembly, NDH-1 is composed of 14 different subunits. Subunits NuoA, H, J, K, L, M, N constitute the membrane sector of the complex. Requires [4Fe-4S] cluster as cofactor.

It localises to the cell inner membrane. It carries out the reaction a quinone + NADH + 5 H(+)(in) = a quinol + NAD(+) + 4 H(+)(out). NDH-1 shuttles electrons from NADH, via FMN and iron-sulfur (Fe-S) centers, to quinones in the respiratory chain. The immediate electron acceptor for the enzyme in this species is believed to be ubiquinone. Couples the redox reaction to proton translocation (for every two electrons transferred, four hydrogen ions are translocated across the cytoplasmic membrane), and thus conserves the redox energy in a proton gradient. The sequence is that of NADH-quinone oxidoreductase subunit I 2 from Rhodopseudomonas palustris (strain BisB18).